Consider the following 992-residue polypeptide: Protein translocase subunit SecA (992 aa).

ATP contacts are provided by residues Q86, 104–108, and D535; that span reads GEGKT. The disordered stretch occupies residues 885 to 910; it reads IAGGSSEVEQTRKPQRRTVQQIGRND. Zn(2+) is bound by residues C912, C914, C923, and H924. Residues 965–992 form a disordered region; sequence IDNGTLPAASPKTPRGRQPQAVPRGKKR.

Belongs to the SecA family. Monomer and homodimer. Part of the essential Sec protein translocation apparatus which comprises SecA, SecYEG and auxiliary proteins SecDF. Other proteins may also be involved. Zn(2+) serves as cofactor.

It localises to the cell membrane. The protein resides in the cytoplasm. The catalysed reaction is ATP + H2O + cellular proteinSide 1 = ADP + phosphate + cellular proteinSide 2.. Part of the Sec protein translocase complex. Interacts with the SecYEG preprotein conducting channel. Has a central role in coupling the hydrolysis of ATP to the transfer of proteins into and across the cell membrane, serving as an ATP-driven molecular motor driving the stepwise translocation of polypeptide chains across the membrane. This Chloroflexus aggregans (strain MD-66 / DSM 9485) protein is Protein translocase subunit SecA.